A 262-amino-acid polypeptide reads, in one-letter code: MRFGLNIDHIVTLREIRKTYEPEILEALFIAKNTHKVDLITIHLREDKRHIQNEDVLRLLEISPLPINIECSINVAITDFLCSLKNKPSKVTIVPENRNEVTTEGGLDCSLKGLGEVIRAYHNKGIEVSLFVDPLKDALHFAKEHQVKQVEFHTGVYANLHNALYSNANNQIHAISALKDKCPKELKEELHNAFLQLRRMSKEAFFMGIVVCAGHGLNYTNVKELLKIPSLRELNIGHSVVSKAVLVGLEKAILEMAQLIKR.

N6 lines the 3-amino-2-oxopropyl phosphate pocket. 8 to 9 (DH) provides a ligand contact to 1-deoxy-D-xylulose 5-phosphate. Residue R17 participates in 3-amino-2-oxopropyl phosphate binding. H43 serves as the catalytic Proton acceptor. 2 residues coordinate 1-deoxy-D-xylulose 5-phosphate: R45 and H50. E70 acts as the Proton acceptor in catalysis. 1-deoxy-D-xylulose 5-phosphate is bound at residue T102. The Proton donor role is filled by H215. Residues G216 and 237 to 238 (GH) each bind 3-amino-2-oxopropyl phosphate.

This sequence belongs to the PNP synthase family. As to quaternary structure, homooctamer; tetramer of dimers.

Its subcellular location is the cytoplasm. It catalyses the reaction 3-amino-2-oxopropyl phosphate + 1-deoxy-D-xylulose 5-phosphate = pyridoxine 5'-phosphate + phosphate + 2 H2O + H(+). It participates in cofactor biosynthesis; pyridoxine 5'-phosphate biosynthesis; pyridoxine 5'-phosphate from D-erythrose 4-phosphate: step 5/5. Catalyzes the complicated ring closure reaction between the two acyclic compounds 1-deoxy-D-xylulose-5-phosphate (DXP) and 3-amino-2-oxopropyl phosphate (1-amino-acetone-3-phosphate or AAP) to form pyridoxine 5'-phosphate (PNP) and inorganic phosphate. The sequence is that of Pyridoxine 5'-phosphate synthase from Helicobacter pylori (strain HPAG1).